A 230-amino-acid chain; its full sequence is Large ribosomal subunit protein uL1 (230 aa).

It belongs to the universal ribosomal protein uL1 family. Part of the 50S ribosomal subunit.

In terms of biological role, binds directly to 23S rRNA. The L1 stalk is quite mobile in the ribosome, and is involved in E site tRNA release. Functionally, protein L1 is also a translational repressor protein, it controls the translation of the L11 operon by binding to its mRNA. This is Large ribosomal subunit protein uL1 from Bradyrhizobium sp. (strain ORS 278).